Reading from the N-terminus, the 294-residue chain is ATP synthase gamma chain (294 aa).

It belongs to the ATPase gamma chain family. In terms of assembly, F-type ATPases have 2 components, CF(1) - the catalytic core - and CF(0) - the membrane proton channel. CF(1) has five subunits: alpha(3), beta(3), gamma(1), delta(1), epsilon(1). CF(0) has three main subunits: a, b and c.

It localises to the cell inner membrane. Produces ATP from ADP in the presence of a proton gradient across the membrane. The gamma chain is believed to be important in regulating ATPase activity and the flow of protons through the CF(0) complex. The protein is ATP synthase gamma chain of Campylobacter lari (strain RM2100 / D67 / ATCC BAA-1060).